Reading from the N-terminus, the 99-residue chain is TMVTKLEKDSLVSKLYNSDVALERHRHRYEFNNKYKKDLESVGLRFSGIYEEKNLVEVIEIPSLKFFVASQFHPEFTSRPNKPTPLFKGFIKAIIENNK.

A Glutamine amidotransferase type-1 domain is found at 1–99; that stretch reads TMVTKLEKDS…FIKAIIENNK (99 aa). Residue Arg-28 participates in L-glutamine binding. Catalysis depends on residues His-73 and Glu-75.

It belongs to the CTP synthase family. Homotetramer.

The catalysed reaction is UTP + L-glutamine + ATP + H2O = CTP + L-glutamate + ADP + phosphate + 2 H(+). The enzyme catalyses L-glutamine + H2O = L-glutamate + NH4(+). It catalyses the reaction UTP + NH4(+) + ATP = CTP + ADP + phosphate + 2 H(+). It participates in pyrimidine metabolism; CTP biosynthesis via de novo pathway; CTP from UDP: step 2/2. With respect to regulation, allosterically activated by GTP, when glutamine is the substrate; GTP has no effect on the reaction when ammonia is the substrate. The allosteric effector GTP functions by stabilizing the protein conformation that binds the tetrahedral intermediate(s) formed during glutamine hydrolysis. Inhibited by the product CTP, via allosteric rather than competitive inhibition. Functionally, catalyzes the ATP-dependent amination of UTP to CTP with either L-glutamine or ammonia as the source of nitrogen. Regulates intracellular CTP levels through interactions with the four ribonucleotide triphosphates. The sequence is that of CTP synthase from Mycoplasma capricolum subsp. capripneumoniae.